Reading from the N-terminus, the 638-residue chain is LIM domain kinase 2 (638 aa).

LIM zinc-binding domains follow at residues 12 to 63 and 72 to 124; these read CPGC…CPKD and CHGC…CGKC. One can recognise a PDZ domain in the interval 152–239; it reads LISMPATTEG…TLQLLIEHDP (88 aa). Threonine 210 is modified (phosphothreonine). Positions 279 to 304 are disordered; sequence LRRRSLRRSNSISKSPGPSSPKEPLL. The span at 286–302 shows a compositional bias: low complexity; the sequence is RSNSISKSPGPSSPKEP. A phosphoserine mark is found at serine 293 and serine 298. Residues 331-608 enclose the Protein kinase domain; sequence LIHGEVLGKG…DSFEALSLYL (278 aa). ATP contacts are provided by residues 337–345 and lysine 360; that span reads LGKGFFGQA. The active site involves aspartate 451. Phosphothreonine; by ROCK1 and CDC42BP is present on threonine 505.

It belongs to the protein kinase superfamily. TKL Ser/Thr protein kinase family. As to quaternary structure, interacts with LIMK2b. Interacts with LIMK2a. In terms of assembly, binds ROCK1 and MARF1. Interacts with NISCH. Post-translationally, phosphorylated on serine and/or threonine residues by ROCK1.

The protein resides in the cytoplasm. It localises to the cytoskeleton. Its subcellular location is the spindle. The protein localises to the microtubule organizing center. It is found in the centrosome. The protein resides in the nucleus. It localises to the perinuclear region. It catalyses the reaction L-seryl-[protein] + ATP = O-phospho-L-seryl-[protein] + ADP + H(+). The enzyme catalyses L-threonyl-[protein] + ATP = O-phospho-L-threonyl-[protein] + ADP + H(+). Its function is as follows. Serine/threonine-protein kinase that plays an essential role in the regulation of actin filament dynamics. Acts downstream of several Rho family GTPase signal transduction pathways. Involved in astral microtubule organization and mitotic spindle orientation during early stages of mitosis by mediating phosphorylation of TPPP. Displays serine/threonine-specific phosphorylation of myelin basic protein and histone (MBP) in vitro. Suppresses ciliogenesis via multiple pathways; phosphorylation of CFL1, suppression of directional trafficking of ciliary vesicles to the ciliary base, and by facilitating YAP1 nuclear localization where it acts as a transcriptional corepressor of the TEAD4 target genes AURKA and PLK1. This is LIM domain kinase 2 (LIMK2) from Homo sapiens (Human).